Consider the following 404-residue polypeptide: Probable oxalate decarboxylase ARB_04859 (404 aa).

A signal peptide spans 1 to 17 (MKYSAVLVAALAAIADA). The Cupin type-1 1 domain occupies 74-215 (FSLSKTRMLY…NFGVPPSTFD (142 aa)). Residues His-117, His-119, Glu-123, and His-162 each contribute to the Mn(2+) site. 2 N-linked (GlcNAc...) asparagine glycosylation sites follow: Asn-226 and Asn-244. The Cupin type-1 2 domain maps to 249–393 (FHISNAPEIQ…AINVPIEVIE (145 aa)). 4 residues coordinate Mn(2+): His-296, His-298, Glu-303, and His-342. Asn-346 is a glycosylation site (N-linked (GlcNAc...) asparagine). Glu-357 functions as the Proton donor in the catalytic mechanism.

The cofactor is Mn(2+).

It localises to the secreted. The enzyme catalyses oxalate + H(+) = formate + CO2. Functionally, converts oxalate to formate and CO(2) in an O(2)-dependent reaction. Can also catalyze minor side reactions: oxalate oxidation to produce H(2)O(2), and oxalate-dependent, H(2)O(2)-independent dye oxidations. This chain is Probable oxalate decarboxylase ARB_04859, found in Arthroderma benhamiae (strain ATCC MYA-4681 / CBS 112371) (Trichophyton mentagrophytes).